A 75-amino-acid chain; its full sequence is Small ribosomal subunit protein bS18c (75 aa).

It belongs to the bacterial ribosomal protein bS18 family. In terms of assembly, part of the 30S ribosomal subunit.

The protein resides in the plastid. It localises to the chloroplast. The polypeptide is Small ribosomal subunit protein bS18c (rps18) (Marchantia polymorpha (Common liverwort)).